The chain runs to 832 residues: Valine--tRNA ligase (832 aa).

A 'HIGH' region motif is present at residues 41 to 51; that stretch reads PNVTGKLHLGH. The 'KMSKS' region motif lies at 512 to 516; sequence KMSKS. Lysine 515 is an ATP binding site. The stretch at 760-831 forms a coiled coil; that stretch reads FIEISQEQKQ…QIYLEELKWK (72 aa).

This sequence belongs to the class-I aminoacyl-tRNA synthetase family. ValS type 1 subfamily. As to quaternary structure, monomer.

It is found in the cytoplasm. The catalysed reaction is tRNA(Val) + L-valine + ATP = L-valyl-tRNA(Val) + AMP + diphosphate. Functionally, catalyzes the attachment of valine to tRNA(Val). As ValRS can inadvertently accommodate and process structurally similar amino acids such as threonine, to avoid such errors, it has a 'posttransfer' editing activity that hydrolyzes mischarged Thr-tRNA(Val) in a tRNA-dependent manner. This is Valine--tRNA ligase from Mycoplasmopsis synoviae (strain 53) (Mycoplasma synoviae).